A 155-amino-acid polypeptide reads, in one-letter code: 6,7-dimethyl-8-ribityllumazine synthase (155 aa).

Residues Trp23, 57–59 (AWE), and 81–83 (CVI) contribute to the 5-amino-6-(D-ribitylamino)uracil site. 86 to 87 (DT) serves as a coordination point for (2S)-2-hydroxy-3-oxobutyl phosphate. The Proton donor role is filled by His89. Residue Asn114 participates in 5-amino-6-(D-ribitylamino)uracil binding. A (2S)-2-hydroxy-3-oxobutyl phosphate-binding site is contributed by Arg128.

This sequence belongs to the DMRL synthase family. Forms an icosahedral capsid composed of 60 subunits, arranged as a dodecamer of pentamers.

It catalyses the reaction (2S)-2-hydroxy-3-oxobutyl phosphate + 5-amino-6-(D-ribitylamino)uracil = 6,7-dimethyl-8-(1-D-ribityl)lumazine + phosphate + 2 H2O + H(+). It participates in cofactor biosynthesis; riboflavin biosynthesis; riboflavin from 2-hydroxy-3-oxobutyl phosphate and 5-amino-6-(D-ribitylamino)uracil: step 1/2. Its function is as follows. Catalyzes the formation of 6,7-dimethyl-8-ribityllumazine by condensation of 5-amino-6-(D-ribitylamino)uracil with 3,4-dihydroxy-2-butanone 4-phosphate. This is the penultimate step in the biosynthesis of riboflavin. This Stenotrophomonas maltophilia (strain K279a) protein is 6,7-dimethyl-8-ribityllumazine synthase.